The primary structure comprises 424 residues: Tyrosine--tRNA ligase (424 aa).

Y37 lines the L-tyrosine pocket. The 'HIGH' region motif lies at 42 to 51; it reads PTADSLHLGH. An N6-acetyllysine modification is found at K144. L-tyrosine contacts are provided by Y175 and Q179. A 'KMSKS' region motif is present at residues 235-239; it reads KFGKT. K238 serves as a coordination point for ATP. One can recognise an S4 RNA-binding domain in the interval 357–414; that stretch reads ADLMQALVDSELQPSRGQARKTIASNAITINGEKQSDPEYFFKEEDRLFGRFTLLRRG.

The protein belongs to the class-I aminoacyl-tRNA synthetase family. TyrS type 1 subfamily. Homodimer.

The protein localises to the cytoplasm. The enzyme catalyses tRNA(Tyr) + L-tyrosine + ATP = L-tyrosyl-tRNA(Tyr) + AMP + diphosphate + H(+). Its function is as follows. Catalyzes the attachment of tyrosine to tRNA(Tyr) in a two-step reaction: tyrosine is first activated by ATP to form Tyr-AMP and then transferred to the acceptor end of tRNA(Tyr). In Shigella boydii serotype 4 (strain Sb227), this protein is Tyrosine--tRNA ligase.